Here is a 236-residue protein sequence, read N- to C-terminus: MSELDAREIIEMIAKAKKKTPIVAYIKGDLAGIDFSSFKFFGDERFGILFGEYEDFKKLLEEHREKIEDYHLEVKARNSALPLADLTKYKARIEPGAIIRDMVEIGEGAVIMMGAVINVGAVIGEGTMIDMNAVVGGRAIIGKKCHIGAGAVIAGVIEPPSAKPVVIEDEVLVGANAVILEGVTVGKGAVVAAGAVVTKDVPPYTVVAGVPARVIKQIDEKTKEKTKIVDELRNLE.

It belongs to the transferase hexapeptide repeat family. DapH subfamily.

The catalysed reaction is (S)-2,3,4,5-tetrahydrodipicolinate + acetyl-CoA + H2O = L-2-acetamido-6-oxoheptanedioate + CoA. It functions in the pathway amino-acid biosynthesis; L-lysine biosynthesis via DAP pathway; LL-2,6-diaminopimelate from (S)-tetrahydrodipicolinate (acetylase route): step 1/3. Its function is as follows. Catalyzes the transfer of an acetyl group from acetyl-CoA to tetrahydrodipicolinate. This is 2,3,4,5-tetrahydropyridine-2,6-dicarboxylate N-acetyltransferase from Thermotoga maritima (strain ATCC 43589 / DSM 3109 / JCM 10099 / NBRC 100826 / MSB8).